A 1249-amino-acid chain; its full sequence is Myosin-1 (1249 aa).

Residues 1–42 form a disordered region; that stretch reads MGHSRRPAGGEKKSRGFGRSKAVADVGDGRQTGGKPQVKKAT. In terms of domain architecture, Myosin motor spans 51–730; sequence IGVSDLTLLS…TLFALEAMRD (680 aa). Residue 144–151 participates in ATP binding; sequence GESGAGKT. Serine 372 carries the post-translational modification Phosphoserine. Residues 419-501 are actin-binding; the sequence is SIGILDIYGF…PGVFAALNDA (83 aa). IQ domains follow at residues 734-754 and 755-780; these read HNMA…RTEC and AIRI…QGHQ. In terms of domain architecture, TH1 spans 788 to 978; sequence RRRMSLLGSR…TIHTGPGEPA (191 aa). 2 disordered regions span residues 962–1079 and 1126–1249; these read DDSY…PKKP and WTPE…DDDW. Residues 1021-1035 show a composition bias toward pro residues; it reads AAQPLPRATPQPAEP. The span at 1036–1051 shows a compositional bias: low complexity; the sequence is QPAARAVPQPVAAVAA. Composition is skewed to pro residues over residues 1064-1077 and 1139-1150; these read APPP…PAPK and TPKPAPPPPPAA. An SH3 domain is found at 1076-1137; that stretch reads PKKPTAKVLY…PEAYLEEQVA (62 aa). A compositionally biased stretch (low complexity) spans 1151 to 1169; the sequence is PRSTPAPATNGAAAAAKAK. Over residues 1200–1221 the composition is skewed to polar residues; it reads VSMNSHDSSGGSGRGTPNSMSN. The span at 1222 to 1231 shows a compositional bias: low complexity; it reads ASLAGGLAEA.

Belongs to the TRAFAC class myosin-kinesin ATPase superfamily. Myosin family. Phosphorylation of the TEDS site (Ser-372) is required for the polarization of the actin cytoskeleton. Phosphorylation probably activates the myosin-I ATPase activity.

The protein localises to the cytoplasm. The protein resides in the cytoskeleton. Its subcellular location is the actin patch. Its function is as follows. Type-I myosin implicated in the organization of the actin cytoskeleton. Required for proper actin cytoskeleton polarization. At the cell cortex, assembles in patch-like structures together with proteins from the actin-polymerizing machinery and promotes actin assembly. Functions as actin nucleation-promoting factor (NPF) for the Arp2/3 complex. Plays an important role in polarized growth, spore germination, hyphal morphogenesis, and septal wall formation. The chain is Myosin-1 (myoA) from Aspergillus fumigatus (strain ATCC MYA-4609 / CBS 101355 / FGSC A1100 / Af293) (Neosartorya fumigata).